The chain runs to 230 residues: Thymine/uracil-DNA glycosylase (230 aa).

4 residues coordinate [4Fe-4S] cluster: Cys204, Cys211, Cys214, and Cys221.

It belongs to the Nth/MutY family. It depends on [4Fe-4S] cluster as a cofactor.

The enzyme catalyses Hydrolyzes mismatched double-stranded DNA and polynucleotides, releasing free thymine.. Its function is as follows. DNA glycosylase that excises thymine from T/G mismatches and uracil from U/G mismatches. Can also process T/GO and U/GO, but not A/G, T/C and U/C. Has weak AP lyase activity. The polypeptide is Thymine/uracil-DNA glycosylase (Pyrobaculum aerophilum (strain ATCC 51768 / DSM 7523 / JCM 9630 / CIP 104966 / NBRC 100827 / IM2)).